Consider the following 406-residue polypeptide: Lysine-specific demethylase 8 (406 aa).

Residues 143–152 show a composition bias toward basic and acidic residues; the sequence is KAERSEEPFS. The disordered stretch occupies residues 143–162; the sequence is KAERSEEPFSKKRKHDCKSE. A JmjC domain is found at 270–406; sequence DQVPELKEDI…LSFSVSFWWS (137 aa). The Fe cation site is built by H311 and D313.

Fe(2+) is required as a cofactor.

It is found in the nucleus. It catalyses the reaction N(6),N(6)-dimethyl-L-lysyl(36)-[histone H3] + 2 2-oxoglutarate + 2 O2 = L-lysyl(36)-[histone H3] + 2 formaldehyde + 2 succinate + 2 CO2. In terms of biological role, histone demethylase required for G2/M phase cell cycle progression. Specifically demethylates dimethylated 'Lys-36' (H3K36me2) of histone H3, an epigenetic repressive mark, thereby acting as a transcription activator. May play a role in the regulation of the circadian clock. This is Lysine-specific demethylase 8 (kdm8) from Danio rerio (Zebrafish).